A 100-amino-acid polypeptide reads, in one-letter code: NAD(P)H-quinone oxidoreductase subunit 4L, chloroplastic (100 aa).

The next 3 helical transmembrane spans lie at 1-21 (MFGHALLLGAFPFCIGIYGLI), 29-49 (ALMCLELIFNAVNVNFVTFPN), and 63-83 (VFVIAVAAAEAAIGSAIVLAI).

The protein belongs to the complex I subunit 4L family. As to quaternary structure, NDH is composed of at least 16 different subunits, 5 of which are encoded in the nucleus.

Its subcellular location is the plastid. It localises to the chloroplast thylakoid membrane. The catalysed reaction is a plastoquinone + NADH + (n+1) H(+)(in) = a plastoquinol + NAD(+) + n H(+)(out). It carries out the reaction a plastoquinone + NADPH + (n+1) H(+)(in) = a plastoquinol + NADP(+) + n H(+)(out). In terms of biological role, NDH shuttles electrons from NAD(P)H:plastoquinone, via FMN and iron-sulfur (Fe-S) centers, to quinones in the photosynthetic chain and possibly in a chloroplast respiratory chain. The immediate electron acceptor for the enzyme in this species is believed to be plastoquinone. Couples the redox reaction to proton translocation, and thus conserves the redox energy in a proton gradient. The chain is NAD(P)H-quinone oxidoreductase subunit 4L, chloroplastic from Huperzia lucidula (Shining clubmoss).